Consider the following 553-residue polypeptide: 2-succinyl-5-enolpyruvyl-6-hydroxy-3-cyclohexene-1-carboxylate synthase (553 aa).

Belongs to the TPP enzyme family. MenD subfamily. In terms of assembly, homodimer. Mg(2+) is required as a cofactor. Mn(2+) serves as cofactor. Requires thiamine diphosphate as cofactor.

The catalysed reaction is isochorismate + 2-oxoglutarate + H(+) = 5-enolpyruvoyl-6-hydroxy-2-succinyl-cyclohex-3-ene-1-carboxylate + CO2. The protein operates within quinol/quinone metabolism; 1,4-dihydroxy-2-naphthoate biosynthesis; 1,4-dihydroxy-2-naphthoate from chorismate: step 2/7. It participates in quinol/quinone metabolism; menaquinone biosynthesis. Its function is as follows. Catalyzes the thiamine diphosphate-dependent decarboxylation of 2-oxoglutarate and the subsequent addition of the resulting succinic semialdehyde-thiamine pyrophosphate anion to isochorismate to yield 2-succinyl-5-enolpyruvyl-6-hydroxy-3-cyclohexene-1-carboxylate (SEPHCHC). This chain is 2-succinyl-5-enolpyruvyl-6-hydroxy-3-cyclohexene-1-carboxylate synthase, found in Thermobifida fusca (strain YX).